The following is a 930-amino-acid chain: MKLKETLNLGQTAFPMRAGLPNKEPQWQEAWDQADIYKKRQALNEGKPAFHLHDGPPYANGNIHVGHALNKISKDIIVRSKSMSGFRAPYVPGWDTHGLPIEQVLAKKGVKRKEMDLAEYLEMCRDYALSQVDKQRDDFKRLGVSADWENPYITLTPDYEADQVRVFGAMADKGYIYRGAKPVYWSWSSESALAEAEIEYHDIDSTSLYYANKVKDGKGILDTDTYIVVWTTTPFTVTASRGLTVGPDMEYVVVVPVGSERKYLLAEVLVDSLAAKFGWENFEIVTHHTGKELNHIVTEHPWDTEVEELVILGDHVTTDSGTGIVHTAPGFGEDDYNVGIANGLDVVVTVDSRGLMMENAGPDFEGQFYDKVTPLVKEKLGDLLLASEVINHSYPFDWRTKKPIIWRAVPQWFASVSKFRQEILDEIEKTNFQPEWGKKRLYNMIRDRGDWVISRQRAWGVPLPIFYAEDGTAIMTKEVTDHVADLFAEYGSIVWWQRDAKDLLPAGYTHPGSPNGLFEKETDIMDVWFDSGSSWNGVMNARENLSYPADLYLEGSDQYRGWFNSSLITSVAVNGHAPYKAVLSQGFVLDGKGEKMSKSLGNTILPSDVEKQFGAEILRLWVTSVDSSNDVRISMDILKQTSETYRKIRNTLRFLIANTSDFNPKQDAVAYENLGAVDRYMTIKFNQVVDTINKAYAAYDFMAIYKAVVNFVTVDLSAFYLDFAKDVVYIEAANSPERRRMQTVFYDILVKLTKLLTPILPHTAEEIWSYLEHEEEEFVQLAEMPVAQTFSGQEEILEEWSAFMTLRTQAQKALEEARNAKVIGKSLEAHLTIYASQEVKTLLTALNSDIALLMIVSQLTIADEADKPADSVSFEGVAFTVEHAEGEVCERSRRIDPTTKMRSYGVAVCDASAAIIEQYYPEAVAQGFEA.

The 'HIGH' region signature appears at 57 to 67 (PYANGNIHVGH). Residue Glu-554 participates in L-isoleucyl-5'-AMP binding. A 'KMSKS' region motif is present at residues 595–599 (KMSKS). Lys-598 contributes to the ATP binding site.

It belongs to the class-I aminoacyl-tRNA synthetase family. IleS type 1 subfamily. Monomer.

The protein localises to the cytoplasm. The catalysed reaction is tRNA(Ile) + L-isoleucine + ATP = L-isoleucyl-tRNA(Ile) + AMP + diphosphate. Catalyzes the attachment of isoleucine to tRNA(Ile). As IleRS can inadvertently accommodate and process structurally similar amino acids such as valine, to avoid such errors it has two additional distinct tRNA(Ile)-dependent editing activities. One activity is designated as 'pretransfer' editing and involves the hydrolysis of activated Val-AMP. The other activity is designated 'posttransfer' editing and involves deacylation of mischarged Val-tRNA(Ile). The protein is Isoleucine--tRNA ligase of Streptococcus agalactiae serotype Ia (strain ATCC 27591 / A909 / CDC SS700).